The sequence spans 167 residues: MLVLLAFIIAFHITSAALLFIATVDNAWWVGDEFFADVWRICTNNTNCTVINDSFQEYSTLQAVQATMILSTILCCIAFFIFVLQLFRLKQGERFVLTSIIQLMSCLCVMIAASIYTDRREDIHDKNAKFYPVTREGSYGYSYILAWVAFACTFISGMMYLILRKRK.

A helical transmembrane segment spans residues 1-21; the sequence is MLVLLAFIIAFHITSAALLFI. N-linked (GlcNAc...) asparagine glycosylation is found at Asn44, Asn47, and Asn52. A run of 3 helical transmembrane segments spans residues 67–87, 95–115, and 143–163; these read TMIL…LQLF, FVLT…AASI, and YILA…YLIL.

Belongs to the PMP-22/EMP/MP20 family. As to quaternary structure, interacts with PTK2; regulates PTK2 activation and localization. Interacts with ITGB3; regulates the levels of the heterodimer ITGA5-ITGB3 integrin surface expression. Interacts with P2RX7 (via C-terminus). Interacts with ITGB1; the interaction may be direct or indirect and ITGB1 has a heterodimer form. As to expression, expressed in ciliary body epithelia, sclera, cornea, and retinal pigment epithelium (at protein level). Expressed in lung and endometrial tissue; expression is particularly abundant in secretory endometrium (at protein level). Expressed in placental villous syncytiotrophoblasts and cytotrophoblasts and on the membrane of interstitial trophoblasts (at protein level).

The protein resides in the golgi apparatus membrane. It is found in the cell membrane. Its subcellular location is the apical cell membrane. The protein localises to the membrane raft. It localises to the cytoplasm. The protein resides in the nucleus. It is found in the perinuclear region. In terms of biological role, functions as a key regulator of cell membrane composition by regulating protein surface expression. Also, plays a role in regulation of processes including cell migration, cell proliferation, cell contraction and cell adhesion. Regulates transepithelial migration of neutrophils into the alveolar lumen, potentially via mediation of cell surface expression of adhesion markers and lipid raft formation. Negatively regulates caveolae formation by reducing CAV1 expression and CAV1 amount by increasing lysosomal degradation. Facilitates surface trafficking and formation of lipid rafts bearing GPI-anchor proteins. Regulates surface expression of MHC1 and ICAM1 proteins increasing susceptibility to T-cell mediated cytotoxicity. Regulates the plasma membrane expression of the integrin heterodimers ITGA6-ITGB1, ITGA5-ITGB3 and ITGA5-ITGB1 resulting in modulation of cell-matrix adhesion. Also regulates many processes through PTK2. Regulates blood vessel endothelial cell migration and angiogenesis by regulating VEGF protein expression through PTK2 activation. Regulates cell migration and cell contraction through PTK2 and SRC activation. Regulates focal adhesion density, F-actin conformation and cell adhesion capacity through interaction with PTK2. Positively regulates cell proliferation. Plays a role during cell death and cell blebbing. Promotes angiogenesis and vasculogenesis through induction of VEGFA via a HIF1A-dependent pathway. Also plays a role in embryo implantation by regulating surface trafficking of integrin heterodimer ITGA5-ITGB3. Plays a role in placental angiogenesis and uterine natural killer cell regulation at the maternal-fetal placental interface, however not required in the maternal tissues for a viable pregnancy. Involved in the early stages of embryogenic development and cardiogenesis, potentially via regulation of epithelial-mesenchymal transition timing. May play a role in glomerular filtration. The sequence is that of Epithelial membrane protein 2 (EMP2) from Homo sapiens (Human).